Here is a 916-residue protein sequence, read N- to C-terminus: Nitrate reductase [NADH] 1 (916 aa).

Residues 1–77 (MAASVQPRQF…DDEEEEQEDW (77 aa)) are disordered. A compositionally biased stretch (acidic residues) spans 66-76 (GSDDEEEEQED). Residue Cys192 participates in Mo-molybdopterin binding. One can recognise a Cytochrome b5 heme-binding domain in the interval 541–616 (GKQFTMSEVR…LDTYRIGELI (76 aa)). The heme site is built by His576 and His599. The FAD-binding FR-type domain maps to 656-768 (RDKVPCQLVD…KGPLGHVEYT (113 aa)). FAD is bound by residues 708 to 711 (RAYT), 725 to 729 (LIKVY), Phe730, Phe737, 742 to 744 (LMT), Ser792, and Thr795.

The protein belongs to the nitrate reductase family. Homodimer. FAD is required as a cofactor. The cofactor is heme. Requires Mo-molybdopterin as cofactor.

The catalysed reaction is nitrite + NAD(+) + H2O = nitrate + NADH + H(+). Its function is as follows. Nitrate reductase is a key enzyme involved in the first step of nitrate assimilation in plants, fungi and bacteria. The protein is Nitrate reductase [NADH] 1 (NIA1) of Oryza sativa subsp. japonica (Rice).